A 282-amino-acid polypeptide reads, in one-letter code: DNA-directed RNA polymerase III subunit RPC5 (282 aa).

The segment at 1–70 (MSIDNKLFVT…TGEEEEDDPV (70 aa)) is disordered. Acidic residues-rich tracts occupy residues 10–35 (TEED…DMIA) and 60–70 (DTGEEEEDDPV). Residue Thr61 is modified to Phosphothreonine.

Component of the RNA polymerase III (Pol III) complex consisting of 17 subunits. Interacts with RPC53/RPC4. RPC53/RPC4, RPC37/RPC5 and RPC11/RPC10 probably form a Pol III subcomplex.

It is found in the nucleus. In terms of biological role, DNA-dependent RNA polymerase catalyzes the transcription of DNA into RNA using the four ribonucleoside triphosphates as substrates. Specific peripheric component of RNA polymerase III which synthesizes small RNAs, such as 5S rRNA and tRNAs. The RPC53/RPC4-RPC37/RPC5 subcomplex is required for terminator recognition and reinitiation. In Saccharomyces cerevisiae (strain ATCC 204508 / S288c) (Baker's yeast), this protein is DNA-directed RNA polymerase III subunit RPC5 (RPC37).